Consider the following 93-residue polypeptide: Large ribosomal subunit protein bL27 (93 aa).

The segment at 1 to 22 is disordered; the sequence is MAHKKAGGSSRNGRDSAGRRLG.

This sequence belongs to the bacterial ribosomal protein bL27 family.

The protein is Large ribosomal subunit protein bL27 of Parvibaculum lavamentivorans (strain DS-1 / DSM 13023 / NCIMB 13966).